We begin with the raw amino-acid sequence, 624 residues long: tRNA uridine 5-carboxymethylaminomethyl modification enzyme MnmG (624 aa).

14-19 (GAGHAG) serves as a coordination point for FAD. Position 273-287 (273-287 (GTRYCPSFEDKVVRF)) interacts with NAD(+).

The protein belongs to the MnmG family. As to quaternary structure, homodimer. Heterotetramer of two MnmE and two MnmG subunits. FAD serves as cofactor.

The protein localises to the cytoplasm. Functionally, NAD-binding protein involved in the addition of a carboxymethylaminomethyl (cmnm) group at the wobble position (U34) of certain tRNAs, forming tRNA-cmnm(5)s(2)U34. The protein is tRNA uridine 5-carboxymethylaminomethyl modification enzyme MnmG of Syntrophomonas wolfei subsp. wolfei (strain DSM 2245B / Goettingen).